The sequence spans 455 residues: Guanine/hypoxanthine permease GhxQ (455 aa).

The Cytoplasmic segment spans residues 1–31; sequence MSGDILQTPDAPKPQGALDNYFKITARGSTV. A helical transmembrane segment spans residues 32-55; the sequence is RQEVLAGLTTFLAMVYSVIVVPGM. At 56 to 65 the chain is on the periplasmic side; it reads LGKAGFPPAA. Residues 66–84 form a helical membrane-spanning segment; that stretch reads VFVATCLVAGFGSLLMGLW. Residues 85-86 lie on the Cytoplasmic side of the membrane; that stretch reads AN. The chain crosses the membrane as a discontinuously helical span at residues 87 to 103; the sequence is LPMAIGCAISLTAFTAF. At 104–115 the chain is on the periplasmic side; it reads SLVLGQQISVPV. The helical transmembrane segment at 116-135 threads the bilayer; that stretch reads ALGAVFLMGVIFTAISVTGV. At 136–147 the chain is on the cytoplasmic side; it reads RTWILRNLPMGI. The helical transmembrane segment at 148 to 168 threads the bilayer; that stretch reads AHGTGIGIGLFLLLIAANGVG. The Periplasmic segment spans residues 169–186; the sequence is MVIKNPIEGLPVALGAFT. Residues 187–204 form a helical membrane-spanning segment; that stretch reads SFPVMMSLLGLAVIFGLE. The Cytoplasmic segment spans residues 205–208; the sequence is KCRV. A helical membrane pass occupies residues 209–228; the sequence is PGGILLVIIAISIIGLIFDP. Residues 229–260 lie on the Periplasmic side of the membrane; the sequence is AVKYHGLVAMPSLTGEDGKSLIFSLDIMGALQ. Residues 261 to 289 traverse the membrane as a helical segment; it reads PTVLPSVLALVMTAVFDATGTIRAVAGQA. Topologically, residues 290–302 are cytoplasmic; it reads NLLDKDNQIINGG. Residues 303–318 traverse the membrane as a helical segment; it reads KALTSDSVSSIFSGLV. At 319–320 the chain is on the periplasmic side; it reads GA. Residues 321 to 336 form a discontinuously helical membrane-spanning segment; sequence APAAVYIESAAGTAAG. Topologically, residues 337–340 are cytoplasmic; sequence GKTG. A helical membrane pass occupies residues 341–355; that stretch reads LTATVVGALFLLILF. Topologically, residues 356–366 are periplasmic; the sequence is LSPLSFLIPGY. The chain crosses the membrane as a helical span at residues 367-386; it reads ATAPALMYVGLLMLSNVSKL. At 387–391 the chain is on the cytoplasmic side; it reads DFNDF. The discontinuously helical intramembrane region spans 392-427; the sequence is IDAMAGLVCAVFIVLTCNIVTGIMLGFVTLVVGRVF. Residues 428 to 455 lie on the Cytoplasmic side of the membrane; it reads AREWQKLNIGTVIITAALVAFYAGGWAI.

This sequence belongs to the nucleobase:cation symporter-2 (NCS2) (TC 2.A.40) family. Azg-like subfamily.

The protein localises to the cell membrane. High-affinity transporter for guanine and hypoxanthine. This is Guanine/hypoxanthine permease GhxQ (ghxQ) from Escherichia coli (strain K12).